The primary structure comprises 330 residues: Type II methyltransferase M.HaeIII (330 aa).

The region spanning 1-327 (MNLISLFSGA…KTIKSALEIC (327 aa)) is the SAM-dependent MTase C5-type domain. Residues Glu-29 and 50-51 (DI) contribute to the ATP site. The active site involves Cys-71. Asn-260 is an ATP binding site.

Belongs to the class I-like SAM-binding methyltransferase superfamily. C5-methyltransferase family. As to quaternary structure, monomer.

It catalyses the reaction a 2'-deoxycytidine in DNA + S-adenosyl-L-methionine = a 5-methyl-2'-deoxycytidine in DNA + S-adenosyl-L-homocysteine + H(+). Functionally, a methylase, recognizes the double-stranded sequence 5'-GGCC-3', methylates C-3 on both strands, and protects the DNA from cleavage by the HaeIII endonuclease. This Haemophilus aegyptius protein is Type II methyltransferase M.HaeIII (haeIIIM).